Reading from the N-terminus, the 313-residue chain is Olfactory receptor 1G1 (313 aa).

Topologically, residues 1 to 25 are extracellular; it reads MEGKNLTSISEFFLLGFSEQLEEQK. Asn5 carries N-linked (GlcNAc...) asparagine glycosylation. Residues 26 to 49 form a helical membrane-spanning segment; the sequence is ALFGSFLFMYLVMVAGNLLIILVI. Topologically, residues 50–57 are cytoplasmic; it reads ITDTQLHT. A helical membrane pass occupies residues 58-79; it reads PMYFFLANLSLADACFVSTTVP. The Extracellular portion of the chain corresponds to 80-100; that stretch reads KMLANIQIQSQAISYSGCLLQ. A disulfide bond links Cys97 and Cys189. A helical membrane pass occupies residues 101–120; sequence LYFFMLFVMLEAFLLAVMAY. Residues 121-140 are Cytoplasmic-facing; it reads DHYVAICHPLHYILIMSPGL. Residues 141-158 traverse the membrane as a helical segment; sequence CVFLVSASWIMNALYSLL. Over 159–196 the chain is Extracellular; it reads HTLLMNSLSFCANHEIPHFFCDIDPLLSLSCADPFTNE. Residues 197–219 form a helical membrane-spanning segment; the sequence is LVIFITGGLTGLICVLCLIISYT. The Cytoplasmic segment spans residues 220–236; sequence NVFSTILKIPSAQGKRK. Residues 237–259 form a helical membrane-spanning segment; it reads AFSTCSSHLSVVSLFXGTSFCVY. Topologically, residues 260 to 272 are extracellular; sequence FSPPSTRXAQKDT. A helical membrane pass occupies residues 273–292; it reads VASVMYTVVTPMLNPFIYSL. The Cytoplasmic portion of the chain corresponds to 293–313; the sequence is RNQEIKSSLRKLIWVRKIHSP.

The protein belongs to the G-protein coupled receptor 1 family.

The protein resides in the cell membrane. Its function is as follows. Odorant receptor. The sequence is that of Olfactory receptor 1G1 (OR1G1) from Pan troglodytes (Chimpanzee).